A 193-amino-acid chain; its full sequence is UPF0301 protein Bfl251 (193 aa).

Belongs to the UPF0301 (AlgH) family.

The chain is UPF0301 protein Bfl251 from Blochmanniella floridana.